The following is a 542-amino-acid chain: Monocarboxylate transporter 3 (542 aa).

Topologically, residues 1–19 (MGRADPEEGQLPAPVKPPD) are cytoplasmic. Residues 20 to 40 (GGWGWIVLFGCFVITGFSYAF) traverse the membrane as a helical segment. The Extracellular segment spans residues 41–63 (PKAVSVYFKELMKDFHVGYSDTA). Residues 64-84 (WISSIMLAMLYGTGPVCSIMV) form a helical membrane-spanning segment. Residues 85–93 (NQFGCRPVM) are Cytoplasmic-facing. The helical transmembrane segment at 94–114 (LIGGLLASSGMILASFTTNII) threads the bilayer. Residues 115-119 (ELYLT) are Extracellular-facing. A helical transmembrane segment spans residues 120–140 (AGVLTGLGMALNFQPSLIMLG). The Cytoplasmic segment spans residues 141–152 (TYFDKRRPLANG). A helical transmembrane segment spans residues 153-173 (LAAAGSPVFLSSLSPLGQVLL). Topologically, residues 174 to 181 (EKFGWRGG) are extracellular. Residues 182–202 (FLIMGGLLLNCCTCGAVMRPL) traverse the membrane as a helical segment. Residues 203–265 (DAGMKRKTEK…LDFSIFSNRG (63 aa)) are Cytoplasmic-facing. Positions 226-247 (GGKSEEGISTTDGTKKTKKAKK) are disordered. A helical transmembrane segment spans residues 266 to 286 (FIIYTISKFILVLGLFVPPIL). Topologically, residues 287–301 (LVNYAKDTGVPDTEA) are extracellular. The helical transmembrane segment at 302-322 (AFLLSIIGFIDIFARPACGMV) threads the bilayer. Residues 323–330 (AGLKWVRP) lie on the Cytoplasmic side of the membrane. Residues 331 to 351 (HVAYLFSFAMLFNGLTDICSA) form a helical membrane-spanning segment. Residues 352 to 357 (RASNYT) are Extracellular-facing. A helical membrane pass occupies residues 358–378 (GLVIFCVFFGISYGMVGALQF). Topologically, residues 379 to 392 (EVLMAIVGSQKFSS) are cytoplasmic. A helical membrane pass occupies residues 393–413 (AIGLVLLIEAFAVLIGPPSAG). Topologically, residues 414–423 (RLVDALKNYE) are extracellular. The helical transmembrane segment at 424–444 (VIFYLAGSEVVLSALFLAMAT) threads the bilayer. The Cytoplasmic portion of the chain corresponds to 445–542 (YCCLNRGKKT…ADQTVERDSF (98 aa)). Residues 453-542 (KTPPPEKNPS…ADQTVERDSF (90 aa)) form a disordered region. Basolateral sorting signal regions lie at residues 465-510 (GGSD…VEDE) and 511-532 (QSGEGGRCPEADGEVSSRAGCN). The span at 468–478 (DTEEAESDVQE) shows a compositional bias: acidic residues.

This sequence belongs to the major facilitator superfamily. Monocarboxylate porter (TC 2.A.1.13) family. As to expression, retinal pigment epithelium.

It is found in the basolateral cell membrane. The enzyme catalyses (S)-lactate(in) + H(+)(in) = (S)-lactate(out) + H(+)(out). Probable retinal pigment epithelium (RPE)-specific proton-coupled L-lactate transporter. May facilitate transport of lactate and H(+) out of the retina and could therefore play a role in pH and ion homeostasis of the outer retina. This Gallus gallus (Chicken) protein is Monocarboxylate transporter 3 (SLC16A8).